A 677-amino-acid chain; its full sequence is Methionine--tRNA ligase (677 aa).

The 'HIGH' region signature appears at 15 to 25; it reads PYANGSIHLGH. Zn(2+)-binding residues include C146, C149, C159, and C162. The short motif at 333 to 337 is the 'KMSKS' region element; that stretch reads KMSKS. Residue K336 participates in ATP binding. Positions 575–677 constitute a tRNA-binding domain; it reads DFAKIDLRVA…DGAKPGQQVK (103 aa).

This sequence belongs to the class-I aminoacyl-tRNA synthetase family. MetG type 1 subfamily. As to quaternary structure, homodimer. Requires Zn(2+) as cofactor.

Its subcellular location is the cytoplasm. It carries out the reaction tRNA(Met) + L-methionine + ATP = L-methionyl-tRNA(Met) + AMP + diphosphate. Is required not only for elongation of protein synthesis but also for the initiation of all mRNA translation through initiator tRNA(fMet) aminoacylation. The sequence is that of Methionine--tRNA ligase from Salmonella paratyphi B (strain ATCC BAA-1250 / SPB7).